A 155-amino-acid chain; its full sequence is Cytochrome c-550 (155 aa).

Positions 1–20 (MKISIYATLAAITLALPAAA) are cleaved as a signal peptide. Q21 carries the post-translational modification Pyrrolidone carboxylic acid. Heme c is bound by residues C35, C38, H39, and M120. The propeptide occupies 150–155 (AEGESN).

In terms of processing, binds 1 heme c group covalently per subunit.

The chain is Cytochrome c-550 (cycA) from Paracoccus denitrificans.